A 143-amino-acid chain; its full sequence is ATP synthase subunit b', chloroplastic (143 aa).

The helical transmembrane segment at 12-31 (LPVMGLQVVLLSWLLEQILY) threads the bilayer.

This sequence belongs to the ATPase B chain family. In terms of assembly, F-type ATPases have 2 components, F(1) - the catalytic core - and F(0) - the membrane proton channel. F(1) has five subunits: alpha(3), beta(3), gamma(1), delta(1), epsilon(1). F(0) has four main subunits: a(1), b(1), b'(1) and c(10-14). The alpha and beta chains form an alternating ring which encloses part of the gamma chain. F(1) is attached to F(0) by a central stalk formed by the gamma and epsilon chains, while a peripheral stalk is formed by the delta, b and b' chains.

The protein resides in the plastid. Its subcellular location is the chloroplast thylakoid membrane. Functionally, f(1)F(0) ATP synthase produces ATP from ADP in the presence of a proton or sodium gradient. F-type ATPases consist of two structural domains, F(1) containing the extramembraneous catalytic core and F(0) containing the membrane proton channel, linked together by a central stalk and a peripheral stalk. During catalysis, ATP synthesis in the catalytic domain of F(1) is coupled via a rotary mechanism of the central stalk subunits to proton translocation. Its function is as follows. Component of the F(0) channel, it forms part of the peripheral stalk, linking F(1) to F(0). The b'-subunit is a diverged and duplicated form of b found in plants and photosynthetic bacteria. This Cyanidioschyzon merolae (strain NIES-3377 / 10D) (Unicellular red alga) protein is ATP synthase subunit b', chloroplastic.